The following is a 636-amino-acid chain: Probable potassium transport system protein Kup (636 aa).

12 helical membrane-spanning segments follow: residues 22-42 (VGLL…SPLY), 64-84 (ILSL…VMFI), 115-135 (LMVI…MITP), 150-170 (FDGI…ALFL), 182-202 (LFGP…VHGI), 220-240 (FFVV…LALT), 261-281 (WFIL…ALLL), 293-313 (LLAP…ATVI), 351-371 (IYIG…VIGF), 383-403 (VAVT…MLLL), 408-428 (PLLA…FFAA), and 433-453 (IVQG…LMST).

Belongs to the HAK/KUP transporter (TC 2.A.72) family.

The protein localises to the cell inner membrane. The enzyme catalyses K(+)(in) + H(+)(in) = K(+)(out) + H(+)(out). Its function is as follows. Transport of potassium into the cell. Likely operates as a K(+):H(+) symporter. The polypeptide is Probable potassium transport system protein Kup (Pseudomonas putida (strain ATCC 700007 / DSM 6899 / JCM 31910 / BCRC 17059 / LMG 24140 / F1)).